The primary structure comprises 250 residues: Probable transcriptional regulatory protein Cag_0165 (250 aa).

Belongs to the TACO1 family.

The protein resides in the cytoplasm. This Chlorobium chlorochromatii (strain CaD3) protein is Probable transcriptional regulatory protein Cag_0165.